The following is a 350-amino-acid chain: Biotin synthase (350 aa).

Residues 1-13 (MVTQAATRPSNDA) show a composition bias toward polar residues. The interval 1–20 (MVTQAATRPSNDAGQDGVTE) is disordered. In terms of domain architecture, Radical SAM core spans 71–296 (PEVEVEGIIS…RTMLRFAGGR (226 aa)). [4Fe-4S] cluster contacts are provided by cysteine 86, cysteine 90, and cysteine 93. Positions 129, 162, 221, and 291 each coordinate [2Fe-2S] cluster.

The protein belongs to the radical SAM superfamily. Biotin synthase family. Homodimer. [4Fe-4S] cluster serves as cofactor. The cofactor is [2Fe-2S] cluster.

The catalysed reaction is (4R,5S)-dethiobiotin + (sulfur carrier)-SH + 2 reduced [2Fe-2S]-[ferredoxin] + 2 S-adenosyl-L-methionine = (sulfur carrier)-H + biotin + 2 5'-deoxyadenosine + 2 L-methionine + 2 oxidized [2Fe-2S]-[ferredoxin]. The protein operates within cofactor biosynthesis; biotin biosynthesis; biotin from 7,8-diaminononanoate: step 2/2. Catalyzes the conversion of dethiobiotin (DTB) to biotin by the insertion of a sulfur atom into dethiobiotin via a radical-based mechanism. This Mycobacterium ulcerans (strain Agy99) protein is Biotin synthase.